The following is a 217-amino-acid chain: 2-phospho-L-lactate guanylyltransferase (217 aa).

Belongs to the CofC family. Homodimer.

It carries out the reaction (2S)-2-phospholactate + GTP + H(+) = (2S)-lactyl-2-diphospho-5'-guanosine + diphosphate. The protein operates within cofactor biosynthesis; coenzyme F420 biosynthesis. Its function is as follows. Guanylyltransferase that catalyzes the activation of (2S)-2-phospholactate (2-PL) as (2S)-lactyl-2-diphospho-5'-guanosine, via the condensation of 2-PL with GTP. It is involved in the biosynthesis of coenzyme F420, a hydride carrier cofactor. This Methanospirillum hungatei JF-1 (strain ATCC 27890 / DSM 864 / NBRC 100397 / JF-1) protein is 2-phospho-L-lactate guanylyltransferase.